The sequence spans 472 residues: Maintenance of mitochondrial morphology protein 1 (472 aa).

Over 1–22 (MAFQQGEAAPVSTQSSLSFTQG) the chain is Lumenal. A helical membrane pass occupies residues 23-43 (FLLGQLSVVLLIGAFIKFFIF). Over 44–472 (GEAPPPPSRG…GSMPEAPGAQ (429 aa)) the chain is Cytoplasmic. Disordered stretches follow at residues 51-92 (SRGL…VPSS), 270-303 (LHTP…PKSS), and 370-472 (RMGR…PGAQ). Residues 81–92 (STSNVLRPVPSS) are compositionally biased toward polar residues. Positions 124–365 (QPESLDWFNV…EPRVQVVGLP (242 aa)) constitute an SMP-LTD domain. Residues 270 to 280 (LHTPSPMPSPP) are compositionally biased toward pro residues. Low complexity predominate over residues 281-297 (TAGAQPAAGAQPTDGGD). The segment covering 450–460 (TRERSLGDDFH) has biased composition (basic and acidic residues).

It belongs to the MMM1 family. In terms of assembly, homodimer. Component of the ER-mitochondria encounter structure (ERMES) or MDM complex, composed of mmm1, mdm10, mdm12 and mdm34. A mmm1 homodimer associates with one molecule of mdm12 on each side in a pairwise head-to-tail manner, and the SMP-LTD domains of mmm1 and mdm12 generate a continuous hydrophobic tunnel for phospholipid trafficking.

It localises to the endoplasmic reticulum membrane. In terms of biological role, component of the ERMES/MDM complex, which serves as a molecular tether to connect the endoplasmic reticulum (ER) and mitochondria. Components of this complex are involved in the control of mitochondrial shape and protein biogenesis, and function in nonvesicular lipid trafficking between the ER and mitochondria. The mdm12-mmm1 subcomplex functions in the major beta-barrel assembly pathway that is responsible for biogenesis of all outer membrane beta-barrel proteins, and acts in a late step after the SAM complex. The mdm10-mdm12-mmm1 subcomplex further acts in the TOM40-specific pathway after the action of the mdm12-mmm1 complex. Essential for establishing and maintaining the structure of mitochondria and maintenance of mtDNA nucleoids. This is Maintenance of mitochondrial morphology protein 1 from Emericella nidulans (strain FGSC A4 / ATCC 38163 / CBS 112.46 / NRRL 194 / M139) (Aspergillus nidulans).